Reading from the N-terminus, the 530-residue chain is MYEIQSFHAGLYDSKNAPVLTGIMRGIEREGLRIDRDGKLAQTPHPVALGSALTHPQITTDFSEALLEFITPPTHRVEDLFKQLYDIQGYTLSKLDDELIWSSSMPCVLNDDATIPVAQYGSSNNGTMKTVYRVGLGHRYGRAMQTVAGLHYNFSLPDAFWSFLHREEYSLLDLQDFKDQKYFALIRNFRRYYWLLVYLFGASPALCGSFIKGREHNLQPLIDERTLHLPYATSLRMGDLGYQSSAQESLYVCYNDKQSYITTLCAAITTPIDEYKAIGLQDEKGEFKQLNTSLLQIENEFYSSIRPKRTAKHGETALSALRNRGVEYIEVRCLDIDPFDPLGVNKPQVRFLDTFLLYCALQDSPDTSPEESANILRNQKTVVTEGRSPKALIESFTKGKIPLKQAGEALIKAMRPVAELLDIAHETEEHTQSLETQLAAILNPELTPSARIISHLSAKKLPYAHYALAQSRHHHETLLAKKPSNNTMQQFEKMAAESLDKQTRLEQKNSGNFSEFLQEYYKQYQMCCDK.

Belongs to the glutamate--cysteine ligase type 1 family. Type 1 subfamily.

It catalyses the reaction L-cysteine + L-glutamate + ATP = gamma-L-glutamyl-L-cysteine + ADP + phosphate + H(+). Its pathway is sulfur metabolism; glutathione biosynthesis; glutathione from L-cysteine and L-glutamate: step 1/2. This chain is Glutamate--cysteine ligase, found in Saccharophagus degradans (strain 2-40 / ATCC 43961 / DSM 17024).